A 124-amino-acid chain; its full sequence is Probable glycine cleavage system H protein (124 aa).

One can recognise a Lipoyl-binding domain in the interval 22 to 104 (TGRVGISEFA…FGDGWLVEID (83 aa)). The residue at position 63 (lysine 63) is an N6-lipoyllysine.

This sequence belongs to the GcvH family. The glycine cleavage system is composed of four proteins: P, T, L and H. (R)-lipoate serves as cofactor.

Functionally, the glycine cleavage system catalyzes the degradation of glycine. The H protein shuttles the methylamine group of glycine from the P protein to the T protein. The polypeptide is Probable glycine cleavage system H protein (Halobacterium salinarum (strain ATCC 700922 / JCM 11081 / NRC-1) (Halobacterium halobium)).